The sequence spans 166 residues: Phospholipase A2 myotoxin inhibitor protein (166 aa).

Residues 1 to 19 (MRLILLSGLLLLGTFLANG) form the signal peptide. A C-type lectin domain is found at 46 to 161 (LKYAFLTVHK…CDDNLLVVCE (116 aa)). Disulfide bonds link Cys-83–Cys-160 and Cys-138–Cys-152. N-linked (GlcNAc...) asparagine glycosylation occurs at Asn-122.

It belongs to the alpha-type phospholipase A2 inhibitor family. As to quaternary structure, oligomer. Homotrimer; non-covalently linked. Post-translationally, glycosylated. The glycosylation has no role in the association of this PLI and PA2 enzyme. In terms of tissue distribution, expressed by the liver.

It localises to the secreted. Its function is as follows. This phospholipase A2 inhibitor binds directly phospholipase A2 in the presence or absence of calcium. Has anti-enzymatic, anti-myotoxic, anti-edema inducing, anti-cytotoxic, anti-bactericidal, and anti-lethal properties against basic and acidic phospholipases A2 from Bothrops venoms. This chain is Phospholipase A2 myotoxin inhibitor protein, found in Bothrops moojeni (Lance-headed viper).